The sequence spans 329 residues: DNA-directed RNA polymerase subunit alpha (329 aa).

Positions 1–231 (MQNSLLKPKA…EQLAVFAQLE (231 aa)) are alpha N-terminal domain (alpha-NTD). Positions 249 to 329 (FDPILLRPVD…SWPPAALEKR (81 aa)) are alpha C-terminal domain (alpha-CTD).

Belongs to the RNA polymerase alpha chain family. As to quaternary structure, homodimer. The RNAP catalytic core consists of 2 alpha, 1 beta, 1 beta' and 1 omega subunit. When a sigma factor is associated with the core the holoenzyme is formed, which can initiate transcription.

It catalyses the reaction RNA(n) + a ribonucleoside 5'-triphosphate = RNA(n+1) + diphosphate. Functionally, DNA-dependent RNA polymerase catalyzes the transcription of DNA into RNA using the four ribonucleoside triphosphates as substrates. In Albidiferax ferrireducens (strain ATCC BAA-621 / DSM 15236 / T118) (Rhodoferax ferrireducens), this protein is DNA-directed RNA polymerase subunit alpha.